Here is a 125-residue protein sequence, read N- to C-terminus: Small ribosomal subunit protein uS13 (125 aa).

The tract at residues 94–125 (SLPVRGQRTQTNARTRKGKRKTVAGKKKAVKK) is disordered. Residues 107–125 (RTRKGKRKTVAGKKKAVKK) show a composition bias toward basic residues.

It belongs to the universal ribosomal protein uS13 family. Part of the 30S ribosomal subunit. Forms a loose heterodimer with protein S19. Forms two bridges to the 50S subunit in the 70S ribosome.

In terms of biological role, located at the top of the head of the 30S subunit, it contacts several helices of the 16S rRNA. In the 70S ribosome it contacts the 23S rRNA (bridge B1a) and protein L5 of the 50S subunit (bridge B1b), connecting the 2 subunits; these bridges are implicated in subunit movement. Contacts the tRNAs in the A and P-sites. This is Small ribosomal subunit protein uS13 from Prosthecochloris aestuarii (strain DSM 271 / SK 413).